The chain runs to 369 residues: Homoserine O-succinyltransferase (369 aa).

In terms of domain architecture, AB hydrolase-1 spans 49 to 328 (NAVFICHALT…RFDSTQSARM (280 aa)). The Nucleophile role is filled by Ser154. Arg224 lines the substrate pocket. Active-site residues include Asp317 and His350. Asp351 contributes to the substrate binding site.

The protein belongs to the AB hydrolase superfamily. MetX family. Homodimer.

The protein resides in the cytoplasm. It carries out the reaction L-homoserine + succinyl-CoA = O-succinyl-L-homoserine + CoA. Its pathway is amino-acid biosynthesis; L-methionine biosynthesis via de novo pathway; O-succinyl-L-homoserine from L-homoserine: step 1/1. Transfers a succinyl group from succinyl-CoA to L-homoserine, forming succinyl-L-homoserine. The protein is Homoserine O-succinyltransferase of Nocardioides sp. (strain ATCC BAA-499 / JS614).